A 399-amino-acid polypeptide reads, in one-letter code: LEM domain-containing protein Bocksbeutel (399 aa).

Residues 4–48 (LSYLDTLGNKELLAKCLEHGLPGVPVTDSTRSVIIRRLKAKITGV) form the LEM domain. 3 disordered regions span residues 49–103 (PLNK…EQSR), 119–141 (SVQT…SYMV), and 233–287 (NSTS…SNLA). Composition is skewed to polar residues over residues 68–77 (HGSQVTTPTS) and 89–99 (GRTSSNNNKIS). The segment covering 233 to 256 (NSTSYEESSTYNPKLSPISPRNTF) has biased composition (polar residues). A helical membrane pass occupies residues 377–397 (FYLILVVSVMLATMVYVVLTP).

The protein resides in the nucleus inner membrane. Its subcellular location is the cytoplasm. It localises to the nucleus. It is found in the nucleoplasm. The protein localises to the endoplasmic reticulum. Inner nuclear membrane protein. May have a role in maintaining the structural integrity of the nuclear lamina. During pupal development, plays essential and redundant functions with the other LEM domain proteins; MAN1 and Ote. Also has a redundant but important role with Ote in larval development. In Drosophila melanogaster (Fruit fly), this protein is LEM domain-containing protein Bocksbeutel.